Consider the following 159-residue polypeptide: Cytochrome c-type biogenesis protein CcmE (159 aa).

The Cytoplasmic portion of the chain corresponds to 1 to 8 (MNPRRKTR). Residues 9–29 (LWVALTVLAGLGLTMALVLYA) traverse the membrane as a helical; Signal-anchor for type II membrane protein segment. The Periplasmic portion of the chain corresponds to 30 to 159 (LRANIDLFYT…PPQAYKDNRP (130 aa)). 2 residues coordinate heme: His-130 and Tyr-134. The tract at residues 130–159 (HDENYTPPEVKAAMDANHTRPPQAYKDNRP) is disordered.

Belongs to the CcmE/CycJ family.

It localises to the cell inner membrane. In terms of biological role, heme chaperone required for the biogenesis of c-type cytochromes. Transiently binds heme delivered by CcmC and transfers the heme to apo-cytochromes in a process facilitated by CcmF and CcmH. The protein is Cytochrome c-type biogenesis protein CcmE of Cronobacter sakazakii (strain ATCC BAA-894) (Enterobacter sakazakii).